A 41-amino-acid polypeptide reads, in one-letter code: U-theraphotoxin-Lk1a (41 aa).

3 disulfide bridges follow: Cys-1-Cys-16, Cys-8-Cys-21, and Cys-15-Cys-36.

It belongs to the neurotoxin 14 (magi-1) family. 08 (Ltx-4) subfamily. As to expression, expressed by the venom gland.

It is found in the secreted. Functionally, toxin that causes irreversible contractile paralysis in adult Aedes aegypti resulting in 100% mortality after 24 hours. In Lasiodora klugi (Bahia scarlet tarantula), this protein is U-theraphotoxin-Lk1a.